The sequence spans 144 residues: Large ribosomal subunit protein uL15 (144 aa).

Positions 1-48 (MRLNTLSPAAGSKSAAKRVGRGIGSGTGKTCGRGHKGQKSRSGGGVRI) are disordered. Over residues 21–31 (RGIGSGTGKTC) the composition is skewed to gly residues.

This sequence belongs to the universal ribosomal protein uL15 family. Part of the 50S ribosomal subunit.

Its function is as follows. Binds to the 23S rRNA. The polypeptide is Large ribosomal subunit protein uL15 (Shewanella woodyi (strain ATCC 51908 / MS32)).